We begin with the raw amino-acid sequence, 342 residues long: Hypoxia responsive morphology factor C (342 aa).

The Bipartite nuclear localization signal motif lies at 46-68 (RMKIPRRKSEYSSHDRLKRARKI). The RNA recognition motif (RRM)-like domain stretch occupies residues 151 to 181 (ADDAWAYNAADMDTAVKFFSEAIYKAIESSP).

Belongs to the hrmA family.

Its subcellular location is the nucleus. Functionally, probably modulates the generation of the hypoxia-typic morphotype (called H-MORPH) with altered biofilm architecture that leads to increased host inflammation, rapid disease progression, and mortality in a murine model of invasive aspergillosis. In Aspergillus fumigatus (strain CBS 144.89 / FGSC A1163 / CEA10) (Neosartorya fumigata), this protein is Hypoxia responsive morphology factor C.